The following is a 283-amino-acid chain: Nucleotide-binding protein Sama_3091 (283 aa).

8–15 (GRSGSGKS) contacts ATP. 56–59 (DIRN) provides a ligand contact to GTP.

Belongs to the RapZ-like family.

Its function is as follows. Displays ATPase and GTPase activities. In Shewanella amazonensis (strain ATCC BAA-1098 / SB2B), this protein is Nucleotide-binding protein Sama_3091.